The sequence spans 486 residues: Serine/threonine-protein kinase 33 (486 aa).

The disordered stretch occupies residues 39–100 (VVEMSQTSST…WGRGNFTEGK (62 aa)). The span at 41–53 (EMSQTSSTGSSEF) shows a compositional bias: polar residues. The segment covering 57-66 (PEKRKEKGAS) has biased composition (basic and acidic residues). Polar residues predominate over residues 68–80 (DVTSGKDSPSKSS). Residues 116 to 381 (YTFGRILGQG…AKELLDNQWL (266 aa)) form the Protein kinase domain. Residues 122–130 (LGQGSFGMV) and Lys-145 contribute to the ATP site. The active-site Proton acceptor is Asp-238. Residues 402 to 451 (KNNPESDEESTTDQRDSRSGQEESKVYQPSRNVPDVSNSSDEEEGKQVGR) are disordered. Ser-407 carries the phosphoserine modification. Residues 413–426 (TDQRDSRSGQEESK) show a composition bias toward basic and acidic residues. Residues 428 to 440 (YQPSRNVPDVSNS) are compositionally biased toward polar residues.

Belongs to the protein kinase superfamily. CAMK Ser/Thr protein kinase family. CaMK subfamily. In terms of assembly, interacts with vimentin/VIM. Autophosphorylated.

Its subcellular location is the cytoplasm. It is found in the perinuclear region. It carries out the reaction L-seryl-[protein] + ATP = O-phospho-L-seryl-[protein] + ADP + H(+). It catalyses the reaction L-threonyl-[protein] + ATP = O-phospho-L-threonyl-[protein] + ADP + H(+). Functionally, serine/threonine protein kinase which phosphorylates vimentin/VIM. Therefore may play a specific role in the dynamic behavior of the intermediate filament cytoskeleton. In Bos taurus (Bovine), this protein is Serine/threonine-protein kinase 33 (STK33).